Reading from the N-terminus, the 289-residue chain is Phosphatidylglycerol--prolipoprotein diacylglyceryl transferase (289 aa).

The next 4 membrane-spanning stretches (helical) occupy residues 21 to 41 (IGPL…LLGI), 53 to 73 (IDPN…IPAA), 95 to 115 (IWHG…ALIL), and 122 to 142 (IPIW…QAIG). Residue arginine 143 coordinates a 1,2-diacyl-sn-glycero-3-phospho-(1'-sn-glycerol). A run of 3 helical transmembrane segments spans residues 182 to 202 (PTFL…IWLF), 215 to 235 (GVMT…IEGL), and 247 to 267 (IAQM…VWIY).

The protein belongs to the Lgt family.

Its subcellular location is the cell inner membrane. The enzyme catalyses L-cysteinyl-[prolipoprotein] + a 1,2-diacyl-sn-glycero-3-phospho-(1'-sn-glycerol) = an S-1,2-diacyl-sn-glyceryl-L-cysteinyl-[prolipoprotein] + sn-glycerol 1-phosphate + H(+). It participates in protein modification; lipoprotein biosynthesis (diacylglyceryl transfer). In terms of biological role, catalyzes the transfer of the diacylglyceryl group from phosphatidylglycerol to the sulfhydryl group of the N-terminal cysteine of a prolipoprotein, the first step in the formation of mature lipoproteins. This Synechococcus elongatus (strain ATCC 33912 / PCC 7942 / FACHB-805) (Anacystis nidulans R2) protein is Phosphatidylglycerol--prolipoprotein diacylglyceryl transferase.